A 258-amino-acid polypeptide reads, in one-letter code: Tryptophan synthase alpha chain (258 aa).

Residues glutamate 47 and aspartate 58 each act as proton acceptor in the active site.

The protein belongs to the TrpA family. As to quaternary structure, tetramer of two alpha and two beta chains.

The enzyme catalyses (1S,2R)-1-C-(indol-3-yl)glycerol 3-phosphate + L-serine = D-glyceraldehyde 3-phosphate + L-tryptophan + H2O. It functions in the pathway amino-acid biosynthesis; L-tryptophan biosynthesis; L-tryptophan from chorismate: step 5/5. The alpha subunit is responsible for the aldol cleavage of indoleglycerol phosphate to indole and glyceraldehyde 3-phosphate. The protein is Tryptophan synthase alpha chain of Bacillus mycoides (strain KBAB4) (Bacillus weihenstephanensis).